The chain runs to 316 residues: 1-phosphofructokinase (316 aa).

Residues 225 to 230 (SMGAGG) and 256 to 257 (GD) contribute to the ATP site. D257 acts as the Proton acceptor in catalysis.

Belongs to the carbohydrate kinase PfkB family.

It catalyses the reaction beta-D-fructose 1-phosphate + ATP = beta-D-fructose 1,6-bisphosphate + ADP + H(+). Its function is as follows. Catalyzes the ATP-dependent phosphorylation of fructose-l-phosphate to fructose-l,6-bisphosphate. This is 1-phosphofructokinase from Rhodobacter capsulatus (Rhodopseudomonas capsulata).